A 389-amino-acid polypeptide reads, in one-letter code: Diaminopimelate decarboxylase (389 aa).

The residue at position 58 (lysine 58) is an N6-(pyridoxal phosphate)lysine. Residues glycine 233 and 271-274 (ELGR) contribute to the pyridoxal 5'-phosphate site. Positions 274, 310, 314, 342, and 370 each coordinate substrate. Tyrosine 370 serves as a coordination point for pyridoxal 5'-phosphate.

It belongs to the Orn/Lys/Arg decarboxylase class-II family. LysA subfamily. In terms of assembly, homodimer. Pyridoxal 5'-phosphate serves as cofactor.

The enzyme catalyses meso-2,6-diaminopimelate + H(+) = L-lysine + CO2. Its pathway is amino-acid biosynthesis; L-lysine biosynthesis via DAP pathway; L-lysine from DL-2,6-diaminopimelate: step 1/1. In terms of biological role, specifically catalyzes the decarboxylation of meso-diaminopimelate (meso-DAP) to L-lysine. This is Diaminopimelate decarboxylase from Francisella tularensis subsp. holarctica (strain LVS).